A 313-amino-acid polypeptide reads, in one-letter code: N-acetyl-gamma-glutamyl-phosphate reductase 2 (313 aa).

The active site involves Cys-117.

Belongs to the NAGSA dehydrogenase family. Type 2 subfamily.

The protein localises to the cytoplasm. It catalyses the reaction N-acetyl-L-glutamate 5-semialdehyde + phosphate + NADP(+) = N-acetyl-L-glutamyl 5-phosphate + NADPH + H(+). Its pathway is amino-acid biosynthesis; L-arginine biosynthesis; N(2)-acetyl-L-ornithine from L-glutamate: step 3/4. Functionally, catalyzes the NADPH-dependent reduction of N-acetyl-5-glutamyl phosphate to yield N-acetyl-L-glutamate 5-semialdehyde. This Pseudomonas putida (strain ATCC 47054 / DSM 6125 / CFBP 8728 / NCIMB 11950 / KT2440) protein is N-acetyl-gamma-glutamyl-phosphate reductase 2.